A 92-amino-acid polypeptide reads, in one-letter code: Small ribosomal subunit protein uS19 (92 aa).

The protein belongs to the universal ribosomal protein uS19 family.

Protein S19 forms a complex with S13 that binds strongly to the 16S ribosomal RNA. The polypeptide is Small ribosomal subunit protein uS19 (Sinorhizobium medicae (strain WSM419) (Ensifer medicae)).